A 974-amino-acid polypeptide reads, in one-letter code: Serine/threonine-protein kinase 10 (974 aa).

The Protein kinase domain maps to 37–295; sequence WEIIGELGDG…AAQLLEHPFV (259 aa). ATP contacts are provided by residues 43–51 and Lys-66; that span reads LGDGAFGKV. The active-site Proton acceptor is the Asp-158. Residues 320–332 are compositionally biased toward acidic residues; the sequence is EDNHEDGEDEDPA. Residues 320-479 form a disordered region; it reads EDNHEDGEDE…EKEDHCEETQ (160 aa). A compositionally biased stretch (polar residues) spans 343 to 353; sequence DPSQTSATSLN. Basic and acidic residues-rich tracts occupy residues 382–406 and 458–477; these read PLKEQEDNLSDKFQVEDHDKPESEA and TMEKYLEKPKEPEKEDHCEE. Coiled-coil stretches lie at residues 605–729 and 870–950; these read QKEQ…EEQK and EKVK…EHLK.

This sequence belongs to the protein kinase superfamily. STE Ser/Thr protein kinase family. STE20 subfamily. In terms of assembly, homodimer. Post-translationally, autophosphorylates.

Its subcellular location is the cell membrane. The enzyme catalyses L-seryl-[protein] + ATP = O-phospho-L-seryl-[protein] + ADP + H(+). It catalyses the reaction L-threonyl-[protein] + ATP = O-phospho-L-threonyl-[protein] + ADP + H(+). Its function is as follows. May act as a polo kinase kinase by mediating phosphorylation of plk1. The protein is Serine/threonine-protein kinase 10 (stk10) of Danio rerio (Zebrafish).